The chain runs to 1180 residues: IQ domain-containing protein N (1180 aa).

A disordered region spans residues 34 to 78 (HPPAPAHPSLLDKMEKAPPQPQHEGLKSKEHLPQQPAEGKTASRR). In terms of domain architecture, IQ 1 spans 103-132 (HARAATLIQANWRGYWLRQKLISQMMAAKA). Disordered stretches follow at residues 283 to 324 (RVSA…ETPK), 476 to 496 (MSKT…PQTR), and 786 to 820 (QRLG…TQGG). IQ domains follow at residues 926–955 (RILA…GAMV), 956–978 (IQAT…ATTT), 979–1001 (IQSA…MLHP), 1113–1142 (QDKA…AAKI), and 1143–1165 (VQAT…LLGP).

As to quaternary structure, interacts with calmodulin.

Essential for spermiogenesis and fertilization. May be required for manchette assembly in elongating spermatids. The sequence is that of IQ domain-containing protein N from Homo sapiens (Human).